Reading from the N-terminus, the 233-residue chain is Large ribosomal subunit protein uL1 (233 aa).

It belongs to the universal ribosomal protein uL1 family. As to quaternary structure, part of the 50S ribosomal subunit.

In terms of biological role, binds directly to 23S rRNA. The L1 stalk is quite mobile in the ribosome, and is involved in E site tRNA release. Functionally, protein L1 is also a translational repressor protein, it controls the translation of the L11 operon by binding to its mRNA. The protein is Large ribosomal subunit protein uL1 of Marinomonas sp. (strain MWYL1).